A 157-amino-acid polypeptide reads, in one-letter code: Small ribosomal subunit protein uS7 (157 aa).

The protein belongs to the universal ribosomal protein uS7 family. In terms of assembly, part of the 30S ribosomal subunit. Contacts proteins S9 and S11.

One of the primary rRNA binding proteins, it binds directly to 16S rRNA where it nucleates assembly of the head domain of the 30S subunit. Is located at the subunit interface close to the decoding center, probably blocks exit of the E-site tRNA. This Salinibacter ruber (strain DSM 13855 / M31) protein is Small ribosomal subunit protein uS7.